The sequence spans 64 residues: Large ribosomal subunit protein bL35 (64 aa).

A compositionally biased stretch (basic residues) spans 1 to 15 (MPKNKTHSGTAKRFR). The disordered stretch occupies residues 1–27 (MPKNKTHSGTAKRFRVTGSGKLRREQA).

It belongs to the bacterial ribosomal protein bL35 family.

This is Large ribosomal subunit protein bL35 from Saccharopolyspora erythraea (strain ATCC 11635 / DSM 40517 / JCM 4748 / NBRC 13426 / NCIMB 8594 / NRRL 2338).